Here is a 532-residue protein sequence, read N- to C-terminus: Pre-piRNA 3'-exonuclease trimmer (532 aa).

Mg(2+) is bound by residues Asp28, Glu30, Asp270, and Asp365. A helical membrane pass occupies residues 503–523 (AGRFAIWSGSIVTGGLALYLI).

The protein belongs to the CAF1 family. In terms of assembly, interacts with Papi/Tdrkh; interaction takes place on the mitochondrial surface and recruits PNLDC1/trimmer to PIWI-bound pre-piRNAs. The cofactor is Mg(2+).

The protein localises to the mitochondrion outer membrane. Functionally, 3'-5' exonuclease that specifically cleaves precursor piRNAs (pre-piRNAs) at their 3' ends. Trims pre-piRNAs to their mature size, a process required for piRNAs maturation and stabilization, and subsequent pre-piRNAs 2'-O-methylation. The piRNA metabolic process mediates the repression of transposable elements during meiosis by forming complexes composed of piRNAs and Piwi proteins and govern the methylation and subsequent repression of transposons. The chain is Pre-piRNA 3'-exonuclease trimmer from Bombyx mori (Silk moth).